A 337-amino-acid chain; its full sequence is Tetraacyldisaccharide 4'-kinase (337 aa).

51–58 (HVGGAGKT) contributes to the ATP binding site.

It belongs to the LpxK family.

The catalysed reaction is a lipid A disaccharide + ATP = a lipid IVA + ADP + H(+). Its pathway is glycolipid biosynthesis; lipid IV(A) biosynthesis; lipid IV(A) from (3R)-3-hydroxytetradecanoyl-[acyl-carrier-protein] and UDP-N-acetyl-alpha-D-glucosamine: step 6/6. Its function is as follows. Transfers the gamma-phosphate of ATP to the 4'-position of a tetraacyldisaccharide 1-phosphate intermediate (termed DS-1-P) to form tetraacyldisaccharide 1,4'-bis-phosphate (lipid IVA). The polypeptide is Tetraacyldisaccharide 4'-kinase (Afipia carboxidovorans (strain ATCC 49405 / DSM 1227 / KCTC 32145 / OM5) (Oligotropha carboxidovorans)).